Reading from the N-terminus, the 1489-residue chain is ABC transporter FUM19 (1489 aa).

10 helical membrane-spanning segments follow: residues 33 to 53 (IIFF…RIFV), 84 to 104 (CFSS…ALSY), 116 to 136 (LLSI…RTLW), 143 to 163 (LEYG…FAVW), 264 to 284 (LLLP…QAFL), 302 to 322 (WGLI…TSLY), 373 to 393 (FLNL…AWFL), 397 to 417 (VGIA…GVSI), 482 to 502 (IASL…MLAA), and 511 to 531 (HKVY…GSIF). An ABC transmembrane type-1 1 domain is found at 272-539 (IALIGLSLAQ…IFRSVSPLMS (268 aa)). The ABC transporter 1 domain occupies 591-823 (VKVIQASFGW…YQSHLQSLCI (233 aa)). N-linked (GlcNAc...) asparagine glycans are attached at residues N612 and N616. 625–632 (GPVGSGKS) contacts ATP. N670 carries N-linked (GlcNAc...) asparagine glycosylation. Over residues 852–862 (EQTRSSRRGAD) the composition is skewed to basic and acidic residues. The segment at 852-874 (EQTRSSRRGADNQETIASGADSS) is disordered. Residues 863–874 (NQETIASGADSS) show a composition bias toward polar residues. A run of 6 helical transmembrane segments spans residues 890 to 910 (AVPP…GFLY), 945 to 965 (ILAL…FALI), 977 to 999 (AITR…NYFS), 1031 to 1051 (AASS…LYFV), 1120 to 1140 (WLLF…VALV), and 1149 to 1169 (GFAG…TNVV). The 286-residue stretch at 902-1187 (SSLSYGFLYS…SMGAVSRLKA (286 aa)) folds into the ABC transmembrane type-1 2 domain. The ABC transporter 2 domain maps to 1214–1485 (IKIDGVSASY…KEGKFRALWE (272 aa)). 1254–1261 (GRTGSGKS) contacts ATP.

Belongs to the ABC transporter superfamily. ABCC family. Conjugate transporter (TC 3.A.1.208) subfamily.

The protein localises to the cell membrane. Functionally, ABC transporter that may provide the dual role of fumonisin export and self-protection by allowing the fungus to evade the harmful effect of its own fumonisin production. Plays a role in the repression of the gene cluster that mediates fumonisin biosynthesis. The protein is ABC transporter FUM19 of Gibberella moniliformis (strain M3125 / FGSC 7600) (Maize ear and stalk rot fungus).